The primary structure comprises 501 residues: 2,3-bisphosphoglycerate-independent phosphoglycerate mutase (501 aa).

Mn(2+) contacts are provided by aspartate 12 and serine 62. Serine 62 acts as the Phosphoserine intermediate in catalysis. Substrate-binding positions include histidine 121, 150 to 151 (RD), arginine 182, arginine 188, 253 to 256 (RSDR), and lysine 323. Residues aspartate 390, histidine 394, aspartate 431, histidine 432, and histidine 450 each contribute to the Mn(2+) site.

It belongs to the BPG-independent phosphoglycerate mutase family. As to quaternary structure, monomer. The cofactor is Mn(2+).

It carries out the reaction (2R)-2-phosphoglycerate = (2R)-3-phosphoglycerate. It participates in carbohydrate degradation; glycolysis; pyruvate from D-glyceraldehyde 3-phosphate: step 3/5. In terms of biological role, catalyzes the interconversion of 2-phosphoglycerate and 3-phosphoglycerate. The polypeptide is 2,3-bisphosphoglycerate-independent phosphoglycerate mutase (Ehrlichia canis (strain Jake)).